The primary structure comprises 220 residues: Probable GTP-binding protein EngB (220 aa).

Residues 24–207 (PQPEVAFAGR…HELIESWIAP (184 aa)) form the EngB-type G domain. GTP is bound by residues 32–39 (GRSNAGKS), 59–63 (GRTQH), 81–84 (DLPG), 148–151 (TKCD), and 185–188 (LFSA). Mg(2+)-binding residues include Ser39 and Thr61.

This sequence belongs to the TRAFAC class TrmE-Era-EngA-EngB-Septin-like GTPase superfamily. EngB GTPase family. Mg(2+) is required as a cofactor.

Functionally, necessary for normal cell division and for the maintenance of normal septation. The chain is Probable GTP-binding protein EngB from Paraburkholderia phymatum (strain DSM 17167 / CIP 108236 / LMG 21445 / STM815) (Burkholderia phymatum).